Here is a 375-residue protein sequence, read N- to C-terminus: Putative F-box protein At1g12190 (375 aa).

The 46-residue stretch at 1-46 (MACVKFPWELMEEILYRVPSLSLSRFKTVSKEWNTLLNDKTFIKKH) folds into the F-box domain.

This is Putative F-box protein At1g12190 from Arabidopsis thaliana (Mouse-ear cress).